We begin with the raw amino-acid sequence, 286 residues long: Elongation factor Ts (286 aa).

The segment at 79-82 is involved in Mg(2+) ion dislocation from EF-Tu; that stretch reads TDFV.

Belongs to the EF-Ts family.

The protein resides in the cytoplasm. Functionally, associates with the EF-Tu.GDP complex and induces the exchange of GDP to GTP. It remains bound to the aminoacyl-tRNA.EF-Tu.GTP complex up to the GTP hydrolysis stage on the ribosome. This is Elongation factor Ts from Wolbachia pipientis wMel.